Consider the following 367-residue polypeptide: Phosphoribosylaminoimidazole-succinocarboxamide synthase (367 aa).

Belongs to the SAICAR synthetase family.

It catalyses the reaction 5-amino-1-(5-phospho-D-ribosyl)imidazole-4-carboxylate + L-aspartate + ATP = (2S)-2-[5-amino-1-(5-phospho-beta-D-ribosyl)imidazole-4-carboxamido]succinate + ADP + phosphate + 2 H(+). Its pathway is purine metabolism; IMP biosynthesis via de novo pathway; 5-amino-1-(5-phospho-D-ribosyl)imidazole-4-carboxamide from 5-amino-1-(5-phospho-D-ribosyl)imidazole-4-carboxylate: step 1/2. This chain is Phosphoribosylaminoimidazole-succinocarboxamide synthase, found in Vibrio vulnificus (strain CMCP6).